Here is a 344-residue protein sequence, read N- to C-terminus: Chalcone synthase A (344 aa).

Cysteine 167 is a catalytic residue.

It belongs to the thiolase-like superfamily. Chalcone/stilbene synthases family.

It carries out the reaction (E)-4-coumaroyl-CoA + 3 malonyl-CoA + 3 H(+) = 2',4,4',6'-tetrahydroxychalcone + 3 CO2 + 4 CoA. It participates in secondary metabolite biosynthesis; flavonoid biosynthesis. Its function is as follows. The primary product of this enzyme is 4,2',4',6'-tetrahydroxychalcone (also termed naringenin-chalcone or chalcone) which can under specific conditions spontaneously isomerize into naringenin. The polypeptide is Chalcone synthase A (CHSA) (Ipomoea nil (Japanese morning glory)).